A 184-amino-acid chain; its full sequence is Large ribosomal subunit protein uL5 (184 aa).

The protein belongs to the universal ribosomal protein uL5 family. In terms of assembly, part of the 50S ribosomal subunit; part of the 5S rRNA/L5/L18/L25 subcomplex. Contacts the 5S rRNA and the P site tRNA. Forms a bridge to the 30S subunit in the 70S ribosome.

Functionally, this is one of the proteins that bind and probably mediate the attachment of the 5S RNA into the large ribosomal subunit, where it forms part of the central protuberance. In the 70S ribosome it contacts protein S13 of the 30S subunit (bridge B1b), connecting the 2 subunits; this bridge is implicated in subunit movement. Contacts the P site tRNA; the 5S rRNA and some of its associated proteins might help stabilize positioning of ribosome-bound tRNAs. The polypeptide is Large ribosomal subunit protein uL5 (Fervidobacterium nodosum (strain ATCC 35602 / DSM 5306 / Rt17-B1)).